A 191-amino-acid polypeptide reads, in one-letter code: ADP-ribosylation factor (191 aa).

Glycine 2 carries the N-myristoyl glycine lipid modification. GTP is bound by residues 24 to 31 (GLDAAGKT), 67 to 71 (DVGGQ), and 128 to 131 (NKQD).

Belongs to the small GTPase superfamily. Arf family.

The protein resides in the golgi apparatus. GTP-binding protein involved in protein trafficking; may modulate vesicle budding and uncoating within the Golgi apparatus. This Giardia intestinalis (Giardia lamblia) protein is ADP-ribosylation factor.